Here is a 233-residue protein sequence, read N- to C-terminus: Large ribosomal subunit protein uL1 (233 aa).

It belongs to the universal ribosomal protein uL1 family. Part of the 50S ribosomal subunit.

Binds directly to 23S rRNA. The L1 stalk is quite mobile in the ribosome, and is involved in E site tRNA release. Functionally, protein L1 is also a translational repressor protein, it controls the translation of the L11 operon by binding to its mRNA. The polypeptide is Large ribosomal subunit protein uL1 (Geotalea daltonii (strain DSM 22248 / JCM 15807 / FRC-32) (Geobacter daltonii)).